A 136-amino-acid chain; its full sequence is Calcitonin (136 aa).

The N-terminal stretch at methionine 1–alanine 25 is a signal peptide. Residues valine 26–serine 82 constitute a propeptide that is removed on maturation. Position 42 is a phosphoserine (serine 42). The interval leucine 64 to arginine 84 is disordered. A disulfide bridge links cysteine 85 with cysteine 91. A glycan (N-linked (GlcNAc...) asparagine) is linked at asparagine 87. The disordered stretch occupies residues glycine 114–asparagine 136. Proline 116 is modified (proline amide). A compositionally biased stretch (basic and acidic residues) spans lysine 118–histidine 130. Positions aspartate 121–asparagine 136 are excised as a propeptide.

It belongs to the calcitonin family.

The protein localises to the secreted. Calcitonin is a peptide hormone that causes a rapid but short-lived drop in the level of calcium and phosphate in blood by promoting the incorporation of those ions in the bones. Calcitonin function is mediated by the calcitonin receptor/CALCR and the CALCR-RAMP2 (AMYR2) receptor complex. This is Calcitonin from Rattus norvegicus (Rat).